A 1337-amino-acid polypeptide reads, in one-letter code: MVFTPSKEQEPAINDRQKDILVSASAGSGKTAVLVERVIQLMETGLSKDAKPSERPNIDDILMVTFTTDAAKNMRDRIRRRLVGATDEHMKAQVARLALANISTIHSFCEQLIKRYYYVIDLDPQFRLIDDAEQQLLKEQAWQATLDDWVANPDQVGALHQLIDNFGAGNLESVVQALDTEADAQPHPSDWLAGLSGLYQFEEGADPRQSAFFKRLLEPLVGPQLKELRDQWAALGEVGPARFAEQVEEDLAKLATTVDDQGHLLGSWDSLAQTLNKKNFAPKLRKRKDDDDPELLDELGVQRGGLRDQLGDLHDTYFFQSAADLVKYGQKAGALIEILTRVATDFRCHYQIIKQDRRLLDFSDLEHYAYAILTGENINPKVTWSDEEARAKRQAAAQVQAELQRHYKEIMIDEYQDTNRLQDDLLRLLHKSGQNHRFMVGDMKQSIYRFRQADPTLFKDYYDQFSADGQSSEALDLSDNYRSRHEVTDLVNLIFEQLMDQQLGEMVYDDKASLKPKADWGADRDQASPATPELLLFDGGVKKTTANPTGEDAIVVRQPEDKVASEVWLIGQRIRELLAKETILDPETKRVRPITPGDIAILSRAKRIHSVIAEQFAKLNLPVMVHGVENYFKATEIRVVMSLLKVIDNPYQDVPLAAVLRSPLIQVAPEVAAKFGLSQGENRIGFTEPELAYLKVNSTSKDFFGVVQQNYYAWRDQEVEAVENHDALTEEELAERVAGDPAGLATKEELGVNCGLIYLKLARFFELRDHLRRVAQRRPLVDLIWTIYQATGYLDYVGGMSGGPQRQANLHALYERASGYEESGFKGLYQFIHFIEQMQKKNDDLGEATTALAGDAINVMTIHKSKGLQFPIVFLVETTHQFQADRDPVTIEPQAGLGFTYVDSTANETMRVKHPLVQQAALKEKKKRQDRAEEMRLLYVALTRAEQRLFITGYVKDADLTKKMDKWNRAFDSASPLLTTTTRLKGQSMLDWIMMTLVRTANFPTLREGVEAAATPLRGLTKAAYQIKLQNADQVQAALNTPLDLHPNATAEQATPAAATSRQFKADLERVLNFTYPDQVATQTTAFQAVSTVREAFARQDPTNLEMGRLEIDRDQIKEAGAYLAPEERAFENPAFITGASDQEPTGTAIGTATHLVFQKLPLTEPLDEGAVRALIKSLTESGLIDNPQVAAGIDVAGVVSFYQTGLGQVITAHPEQVHREVPFSMLLSAHDLFSGIGATDDSEVLIHGIIDGYVQHDDQIDLFDYKTDRISQAHPEEDLQELADKYSGQLVLYADALTKMTGVPLEKIHRHLYFTRAKRVVTLSAPPSSHEPKEEA.

The region spanning 3 to 484 is the UvrD-like helicase ATP-binding domain; that stretch reads FTPSKEQEPA…LDLSDNYRSR (482 aa). ATP is bound at residue 24 to 31; the sequence is ASAGSGKT. A UvrD-like helicase C-terminal domain is found at 522-867; that stretch reads ADRDQASPAT…NVMTIHKSKG (346 aa).

This sequence belongs to the helicase family. AddA subfamily. In terms of assembly, heterodimer of AddA and AddB/RexB. The cofactor is Mg(2+).

The enzyme catalyses Couples ATP hydrolysis with the unwinding of duplex DNA by translocating in the 3'-5' direction.. It catalyses the reaction ATP + H2O = ADP + phosphate + H(+). Functionally, the heterodimer acts as both an ATP-dependent DNA helicase and an ATP-dependent, dual-direction single-stranded exonuclease. Recognizes the chi site generating a DNA molecule suitable for the initiation of homologous recombination. The AddA nuclease domain is required for chi fragment generation; this subunit has the helicase and 3' -&gt; 5' nuclease activities. The protein is ATP-dependent helicase/nuclease subunit A of Limosilactobacillus fermentum (strain NBRC 3956 / LMG 18251) (Lactobacillus fermentum).